A 227-amino-acid polypeptide reads, in one-letter code: ATP-dependent dethiobiotin synthetase BioD (227 aa).

13 to 18 (DIGKTY) serves as a coordination point for ATP. Position 17 (Thr-17) interacts with Mg(2+). Lys-38 is a catalytic residue. Ser-42 serves as a coordination point for substrate. Residues Asp-55, 116 to 119 (EGSG), and 179 to 180 (NN) contribute to the ATP site. Mg(2+) contacts are provided by Asp-55 and Glu-116.

This sequence belongs to the dethiobiotin synthetase family. In terms of assembly, homodimer. It depends on Mg(2+) as a cofactor.

It localises to the cytoplasm. It catalyses the reaction (7R,8S)-7,8-diammoniononanoate + CO2 + ATP = (4R,5S)-dethiobiotin + ADP + phosphate + 3 H(+). It participates in cofactor biosynthesis; biotin biosynthesis; biotin from 7,8-diaminononanoate: step 1/2. Catalyzes a mechanistically unusual reaction, the ATP-dependent insertion of CO2 between the N7 and N8 nitrogen atoms of 7,8-diaminopelargonic acid (DAPA, also called 7,8-diammoniononanoate) to form a ureido ring. The polypeptide is ATP-dependent dethiobiotin synthetase BioD (Clostridium botulinum (strain Eklund 17B / Type B)).